The chain runs to 250 residues: Flap endonuclease Xni (250 aa).

D104 contacts Mg(2+). Residues 160-249 (VQPQQLTDFW…LQGNLQQLRL (90 aa)) form the 5'-3' exonuclease domain. Residues L171, A172, P180, V182, and I185 each coordinate K(+). The tract at residues 184–189 (GIGPKS) is interaction with DNA.

Belongs to the Xni family. Mg(2+) is required as a cofactor. It depends on K(+) as a cofactor.

Its function is as follows. Has flap endonuclease activity. During DNA replication, flap endonucleases cleave the 5'-overhanging flap structure that is generated by displacement synthesis when DNA polymerase encounters the 5'-end of a downstream Okazaki fragment. In Sodalis glossinidius (strain morsitans), this protein is Flap endonuclease Xni.